The following is a 200-amino-acid chain: Probable molybdenum cofactor guanylyltransferase (200 aa).

GTP contacts are provided by residues 9–11 (LAG), Lys21, Asp69, and Asp100. Residue Asp100 participates in Mg(2+) binding.

It belongs to the MobA family. Mg(2+) is required as a cofactor.

The protein resides in the cytoplasm. It catalyses the reaction Mo-molybdopterin + GTP + H(+) = Mo-molybdopterin guanine dinucleotide + diphosphate. Its function is as follows. Transfers a GMP moiety from GTP to Mo-molybdopterin (Mo-MPT) cofactor (Moco or molybdenum cofactor) to form Mo-molybdopterin guanine dinucleotide (Mo-MGD) cofactor. The chain is Probable molybdenum cofactor guanylyltransferase from Bacillus thuringiensis (strain Al Hakam).